The chain runs to 120 residues: Ribosome-binding factor A (120 aa).

It belongs to the RbfA family. In terms of assembly, monomer. Binds 30S ribosomal subunits, but not 50S ribosomal subunits or 70S ribosomes.

It localises to the cytoplasm. Its function is as follows. One of several proteins that assist in the late maturation steps of the functional core of the 30S ribosomal subunit. Associates with free 30S ribosomal subunits (but not with 30S subunits that are part of 70S ribosomes or polysomes). Required for efficient processing of 16S rRNA. May interact with the 5'-terminal helix region of 16S rRNA. In Clostridium botulinum (strain Okra / Type B1), this protein is Ribosome-binding factor A.